The primary structure comprises 252 residues: 2-succinyl-6-hydroxy-2,4-cyclohexadiene-1-carboxylate synthase (252 aa).

It belongs to the AB hydrolase superfamily. MenH family. In terms of assembly, monomer.

The catalysed reaction is 5-enolpyruvoyl-6-hydroxy-2-succinyl-cyclohex-3-ene-1-carboxylate = (1R,6R)-6-hydroxy-2-succinyl-cyclohexa-2,4-diene-1-carboxylate + pyruvate. It participates in quinol/quinone metabolism; 1,4-dihydroxy-2-naphthoate biosynthesis; 1,4-dihydroxy-2-naphthoate from chorismate: step 3/7. Its pathway is quinol/quinone metabolism; menaquinone biosynthesis. In terms of biological role, catalyzes a proton abstraction reaction that results in 2,5-elimination of pyruvate from 2-succinyl-5-enolpyruvyl-6-hydroxy-3-cyclohexene-1-carboxylate (SEPHCHC) and the formation of 2-succinyl-6-hydroxy-2,4-cyclohexadiene-1-carboxylate (SHCHC). The protein is 2-succinyl-6-hydroxy-2,4-cyclohexadiene-1-carboxylate synthase of Salmonella paratyphi A (strain ATCC 9150 / SARB42).